The following is a 164-amino-acid chain: Interferon gamma (164 aa).

Residues 1–19 (MTCQTYNLFVLSVIMIYYG) form the signal peptide. N-linked (GlcNAc...) asparagine glycans are attached at residues Asn42 and Asn61.

It belongs to the type II (or gamma) interferon family. In terms of assembly, homodimer.

It localises to the secreted. Functionally, produced by lymphocytes activated by specific antigens or mitogens. IFN-gamma, in addition to having antiviral activity, has important immunoregulatory functions. It is a potent activator of macrophages, it has antiproliferative effects on transformed cells and it can potentiate the antiviral and antitumor effects of the type I interferons. The sequence is that of Interferon gamma (IFNG) from Meleagris gallopavo (Wild turkey).